The primary structure comprises 433 residues: Serine--tRNA ligase (433 aa).

Residue 235–237 (TSE) participates in L-serine binding. 266–268 (RSE) contacts ATP. An L-serine-binding site is contributed by E289. Residue 353–356 (EISS) participates in ATP binding. S388 is a binding site for L-serine.

Belongs to the class-II aminoacyl-tRNA synthetase family. Type-1 seryl-tRNA synthetase subfamily. As to quaternary structure, homodimer. The tRNA molecule binds across the dimer.

It is found in the cytoplasm. The catalysed reaction is tRNA(Ser) + L-serine + ATP = L-seryl-tRNA(Ser) + AMP + diphosphate + H(+). It catalyses the reaction tRNA(Sec) + L-serine + ATP = L-seryl-tRNA(Sec) + AMP + diphosphate + H(+). It functions in the pathway aminoacyl-tRNA biosynthesis; selenocysteinyl-tRNA(Sec) biosynthesis; L-seryl-tRNA(Sec) from L-serine and tRNA(Sec): step 1/1. Its function is as follows. Catalyzes the attachment of serine to tRNA(Ser). Is also able to aminoacylate tRNA(Sec) with serine, to form the misacylated tRNA L-seryl-tRNA(Sec), which will be further converted into selenocysteinyl-tRNA(Sec). This is Serine--tRNA ligase from Burkholderia ambifaria (strain MC40-6).